The chain runs to 432 residues: Asparagine--tRNA ligase (432 aa).

This sequence belongs to the class-II aminoacyl-tRNA synthetase family. Homodimer.

The protein localises to the cytoplasm. The catalysed reaction is tRNA(Asn) + L-asparagine + ATP = L-asparaginyl-tRNA(Asn) + AMP + diphosphate + H(+). This Lactobacillus delbrueckii subsp. bulgaricus (strain ATCC 11842 / DSM 20081 / BCRC 10696 / JCM 1002 / NBRC 13953 / NCIMB 11778 / NCTC 12712 / WDCM 00102 / Lb 14) protein is Asparagine--tRNA ligase.